Here is a 157-residue protein sequence, read N- to C-terminus: NADPH-dependent 7-cyano-7-deazaguanine reductase (157 aa).

Cys55 serves as the catalytic Thioimide intermediate. Catalysis depends on Asp62, which acts as the Proton donor. Residues 77-79 and 96-97 contribute to the substrate site; these read VES and HE.

It belongs to the GTP cyclohydrolase I family. QueF type 1 subfamily.

The protein localises to the cytoplasm. It carries out the reaction 7-aminomethyl-7-carbaguanine + 2 NADP(+) = 7-cyano-7-deazaguanine + 2 NADPH + 3 H(+). Its pathway is tRNA modification; tRNA-queuosine biosynthesis. Its function is as follows. Catalyzes the NADPH-dependent reduction of 7-cyano-7-deazaguanine (preQ0) to 7-aminomethyl-7-deazaguanine (preQ1). The sequence is that of NADPH-dependent 7-cyano-7-deazaguanine reductase from Neisseria meningitidis serogroup B (strain ATCC BAA-335 / MC58).